A 219-amino-acid chain; its full sequence is Interleukin-12 subunit alpha (219 aa).

A signal peptide spans 1-22 (MCPARSLLLVATLVLLDYLSLA). N-linked (GlcNAc...) asparagine glycosylation is found at Asn24, Asn93, and Asn107. 3 disulfide bridges follow: Cys37–Cys110, Cys64–Cys196, and Cys85–Cys123.

The protein belongs to the IL-6 superfamily. As to quaternary structure, heterodimer with IL12B; disulfide-linked. This heterodimer is known as interleukin IL-12. Heterodimer with EBI3/IL27B; not disulfide-linked. This heterodimer is known as interleukin IL-35. Interacts with NBR1; this interaction promotes IL-12 secretion.

Its subcellular location is the secreted. Its function is as follows. Heterodimerizes with IL12B to form the IL-12 cytokine or with EBI3/IL27B to form the IL-35 cytokine. IL-12 is primarily produced by professional antigen-presenting cells (APCs) such as B-cells and dendritic cells (DCs) as well as macrophages and granulocytes and regulates T-cell and natural killer-cell responses, induces the production of interferon-gamma (IFN-gamma), favors the differentiation of T-helper 1 (Th1) cells and is an important link between innate resistance and adaptive immunity. Mechanistically, exerts its biological effects through a receptor composed of IL12R1 and IL12R2 subunits. Binding to the receptor results in the rapid tyrosine phosphorylation of a number of cellular substrates including the JAK family kinases TYK2 and JAK2. In turn, recruited STAT4 gets phosphorylated and translocates to the nucleus where it regulates cytokine/growth factor responsive genes. As part of IL-35, plays essential roles in maintaining the immune homeostasis of the liver microenvironment and also functions as an immune-suppressive cytokine. Mediates biological events through unconventional receptors composed of IL12RB2 and gp130/IL6ST heterodimers or homodimers. Signaling requires the transcription factors STAT1 and STAT4, which form a unique heterodimer that binds to distinct DNA sites. The protein is Interleukin-12 subunit alpha (IL12A) of Cercocebus atys (Sooty mangabey).